A 324-amino-acid chain; its full sequence is DNA-directed RNA polymerase subunit alpha (324 aa).

The alpha N-terminal domain (alpha-NTD) stretch occupies residues methionine 1–glutamate 230. An alpha C-terminal domain (alpha-CTD) region spans residues valine 244–alanine 324.

The protein belongs to the RNA polymerase alpha chain family. In terms of assembly, homodimer. The RNAP catalytic core consists of 2 alpha, 1 beta, 1 beta' and 1 omega subunit. When a sigma factor is associated with the core the holoenzyme is formed, which can initiate transcription.

The catalysed reaction is RNA(n) + a ribonucleoside 5'-triphosphate = RNA(n+1) + diphosphate. DNA-dependent RNA polymerase catalyzes the transcription of DNA into RNA using the four ribonucleoside triphosphates as substrates. In Dechloromonas aromatica (strain RCB), this protein is DNA-directed RNA polymerase subunit alpha.